We begin with the raw amino-acid sequence, 261 residues long: Global transcriptional regulator CodY (261 aa).

Residues 1-159 (MPNLLEKTRK…ASTVVGIQLL (159 aa)) form a GAF domain region. Positions 207 to 226 (ASVIADRIGITRSVIVNALR) form a DNA-binding region, H-T-H motif.

Belongs to the CodY family.

Its subcellular location is the cytoplasm. Functionally, DNA-binding global transcriptional regulator which is involved in the adaptive response to starvation and acts by directly or indirectly controlling the expression of numerous genes in response to nutrient availability. During rapid exponential growth, CodY is highly active and represses genes whose products allow adaptation to nutrient depletion. The sequence is that of Global transcriptional regulator CodY from Streptococcus agalactiae serotype Ia (strain ATCC 27591 / A909 / CDC SS700).